The chain runs to 2123 residues: Toxin Afp18 (2123 aa).

The interval 864–919 (FFDNSDQDADQPRVRRKREMTDEIMLSDGSSRSEAKALPDENELDTDQSKSRPESA) is disordered. The interval 1771–2123 (VFDSANTNRS…GNSTQSSGLS (353 aa)) is tyrosine glycosyltransferase. UDP-N-acetyl-alpha-D-glucosamine is bound by residues 1850–1852 (IWV) and 1940–1941 (SD). 2 residues coordinate a divalent metal cation: Asp-1957 and Asp-1959. The DxDD motif motif lies at 1957–1960 (DIDD). Asn-1993 lines the UDP-N-acetyl-alpha-D-glucosamine pocket.

A divalent metal cation serves as cofactor.

The protein resides in the secreted. It is found in the host cell membrane. It carries out the reaction L-tyrosyl-[protein] + UDP-N-acetyl-alpha-D-glucosamine = O-(N-acetyl-alpha-D-glucosaminyl)-L-tyrosyl-[protein] + UDP + H(+). Functionally, toxin component of the prophage tail-derived protein translocation system Afp, which is the causative agent of enteric redmouth disease in salmonid fish species. Mono-O-GlcNAcylates the small GTPase RhoA in eukaryotic host cells at Tyr-34, using UDP-N-acetylglucosamine (UDP-GlcNAc) as the sugar donor. Glycosylation of RhoA results in impaired effector and regulator interaction and inactivation of downstream RhoA signaling which leads to actin filament depolymerization and blocks cytokinesis and gastrulation during zebrafish embryo development. To a lesser extent, is also able to glycosylate other Rho family GTPases (RhoB, RhoC, Rac1, Rac2, Rac3, and Cdc42) in vitro at a switch I tyrosine residue, but not Ras proteins. In Yersinia ruckeri serotype O1 (strain ATCC 29473 / DSM 18506 / JCM 15110 / CCUG 14190 / NCIMB 2194 / NCTC 12986 / 2396-61), this protein is Toxin Afp18.